The sequence spans 96 residues: UPF0235 protein Shewmr4_1190 (96 aa).

The protein belongs to the UPF0235 family.

In Shewanella sp. (strain MR-4), this protein is UPF0235 protein Shewmr4_1190.